The sequence spans 632 residues: Extracellular metalloproteinase 2 (632 aa).

A signal peptide spans 1–19; sequence MHGLLLAGLAAALPLGVAG. The propeptide occupies 20–244; that stretch reads LPARQQSGLS…VHNVVDYVAS (225 aa). Asn270 is a glycosylation site (N-linked (GlcNAc...) asparagine). His429 provides a ligand contact to Zn(2+). Glu430 is an active-site residue. Residue His433 coordinates Zn(2+).

This sequence belongs to the peptidase M36 family. Zn(2+) is required as a cofactor.

It localises to the secreted. Secreted metalloproteinase that allows assimilation of proteinaceous substrates and probably acts as a virulence factor. In Arthroderma gypseum (strain ATCC MYA-4604 / CBS 118893) (Microsporum gypseum), this protein is Extracellular metalloproteinase 2 (MEP2).